Consider the following 110-residue polypeptide: UPF0122 protein SH1678 (110 aa).

Belongs to the UPF0122 family.

In terms of biological role, might take part in the signal recognition particle (SRP) pathway. This is inferred from the conservation of its genetic proximity to ftsY/ffh. May be a regulatory protein. This Staphylococcus haemolyticus (strain JCSC1435) protein is UPF0122 protein SH1678.